The sequence spans 164 residues: NADH-quinone oxidoreductase subunit J (164 aa).

The next 5 membrane-spanning stretches (helical) occupy residues 1–21, 30–50, 54–74, 94–114, and 138–158; these read MEFF…CSIF, LYLI…GATF, LEVI…IMMF, YINF…ILSY, and YILV…IVSH.

Belongs to the complex I subunit 6 family. Composed of 13 different subunits. Subunits NuoA, H, J, K, L, M, N constitute the membrane sector of the complex.

Its subcellular location is the cell membrane. It catalyses the reaction a quinone + NADH + 5 H(+)(in) = a quinol + NAD(+) + 4 H(+)(out). In terms of biological role, NDH-1 shuttles electrons from NADH, via FMN and iron-sulfur (Fe-S) centers, to quinones in the respiratory chain. Couples the redox reaction to proton translocation (for every two electrons transferred, four hydrogen ions are translocated across the cytoplasmic membrane), and thus conserves the redox energy in a proton gradient. The sequence is that of NADH-quinone oxidoreductase subunit J (nuoJ) from Buchnera aphidicola subsp. Baizongia pistaciae (strain Bp).